Reading from the N-terminus, the 113-residue chain is Large ribosomal subunit protein uL22 (113 aa).

It belongs to the universal ribosomal protein uL22 family. As to quaternary structure, part of the 50S ribosomal subunit.

Its function is as follows. This protein binds specifically to 23S rRNA; its binding is stimulated by other ribosomal proteins, e.g. L4, L17, and L20. It is important during the early stages of 50S assembly. It makes multiple contacts with different domains of the 23S rRNA in the assembled 50S subunit and ribosome. In terms of biological role, the globular domain of the protein is located near the polypeptide exit tunnel on the outside of the subunit, while an extended beta-hairpin is found that lines the wall of the exit tunnel in the center of the 70S ribosome. The polypeptide is Large ribosomal subunit protein uL22 (Geobacillus kaustophilus (strain HTA426)).